A 213-amino-acid chain; its full sequence is Phosphoenolpyruvate guanylyltransferase (213 aa).

Phosphoenolpyruvate contacts are provided by threonine 146, glycine 161, and serine 164.

Belongs to the CofC family.

The catalysed reaction is phosphoenolpyruvate + GTP + H(+) = enolpyruvoyl-2-diphospho-5'-guanosine + diphosphate. Its pathway is cofactor biosynthesis; coenzyme F420 biosynthesis. Its function is as follows. Guanylyltransferase that catalyzes the activation of phosphoenolpyruvate (PEP) as enolpyruvoyl-2-diphospho-5'-guanosine, via the condensation of PEP with GTP. It is involved in the biosynthesis of coenzyme F420, a hydride carrier cofactor. In Mycolicibacterium vanbaalenii (strain DSM 7251 / JCM 13017 / BCRC 16820 / KCTC 9966 / NRRL B-24157 / PYR-1) (Mycobacterium vanbaalenii), this protein is Phosphoenolpyruvate guanylyltransferase.